The chain runs to 247 residues: 5-oxoprolinase subunit A (247 aa).

The protein belongs to the LamB/PxpA family. As to quaternary structure, forms a complex composed of PxpA, PxpB and PxpC.

The catalysed reaction is 5-oxo-L-proline + ATP + 2 H2O = L-glutamate + ADP + phosphate + H(+). Functionally, catalyzes the cleavage of 5-oxoproline to form L-glutamate coupled to the hydrolysis of ATP to ADP and inorganic phosphate. In Ralstonia pickettii (strain 12J), this protein is 5-oxoprolinase subunit A.